The chain runs to 509 residues: 2-isopropylmalate synthase (509 aa).

In terms of domain architecture, Pyruvate carboxyltransferase spans 5–267 (IQIFDTTLRD…QTALNLEETK (263 aa)). 4 residues coordinate Mn(2+): aspartate 14, histidine 202, histidine 204, and asparagine 238. The segment at 391–509 (KLETLQLQYV…AAENVEKVGN (119 aa)) is regulatory domain.

It belongs to the alpha-IPM synthase/homocitrate synthase family. LeuA type 1 subfamily. As to quaternary structure, homodimer. It depends on Mn(2+) as a cofactor.

Its subcellular location is the cytoplasm. It catalyses the reaction 3-methyl-2-oxobutanoate + acetyl-CoA + H2O = (2S)-2-isopropylmalate + CoA + H(+). Its pathway is amino-acid biosynthesis; L-leucine biosynthesis; L-leucine from 3-methyl-2-oxobutanoate: step 1/4. Its function is as follows. Catalyzes the condensation of the acetyl group of acetyl-CoA with 3-methyl-2-oxobutanoate (2-ketoisovalerate) to form 3-carboxy-3-hydroxy-4-methylpentanoate (2-isopropylmalate). This Staphylococcus aureus (strain Mu3 / ATCC 700698) protein is 2-isopropylmalate synthase.